The chain runs to 500 residues: L-arabinose isomerase (500 aa).

Glu-306, Glu-333, His-350, and His-450 together coordinate Mn(2+).

This sequence belongs to the arabinose isomerase family. As to quaternary structure, homohexamer. Mn(2+) serves as cofactor.

It catalyses the reaction beta-L-arabinopyranose = L-ribulose. The protein operates within carbohydrate degradation; L-arabinose degradation via L-ribulose; D-xylulose 5-phosphate from L-arabinose (bacterial route): step 1/3. Its function is as follows. Catalyzes the conversion of L-arabinose to L-ribulose. The polypeptide is L-arabinose isomerase (Shigella flexneri).